A 234-amino-acid chain; its full sequence is tRNA (guanine-N(1)-)-methyltransferase (234 aa).

S-adenosyl-L-methionine is bound at residue glycine 113.

This sequence belongs to the RNA methyltransferase TrmD family. In terms of assembly, homodimer.

The protein localises to the cytoplasm. The enzyme catalyses guanosine(37) in tRNA + S-adenosyl-L-methionine = N(1)-methylguanosine(37) in tRNA + S-adenosyl-L-homocysteine + H(+). Functionally, specifically methylates guanosine-37 in various tRNAs. The sequence is that of tRNA (guanine-N(1)-)-methyltransferase from Gluconobacter oxydans (strain 621H) (Gluconobacter suboxydans).